A 177-amino-acid chain; its full sequence is Thymidine kinase (177 aa).

11-18 (GPMFSGKS) provides a ligand contact to ATP. Glu83 functions as the Proton acceptor in the catalytic mechanism. Phe113 contacts substrate. Cys138 and Cys141 together coordinate Zn(2+). 157 to 161 (IEIIG) contacts substrate. Residues Cys170 and Cys173 each contribute to the Zn(2+) site.

The protein belongs to the thymidine kinase family. Homotetramer. Two molecules of substrate bind to each enzyme tetramer.

It carries out the reaction thymidine + ATP = dTMP + ADP + H(+). Phosphorylates thymidine and thymidine analogs, such as azidothymidine (AZT). Part of the salvage pathway for pyrimidine deoxyribonucleotide synthesis. The polypeptide is Thymidine kinase (OPG101) (Variola virus (isolate Human/India/Ind3/1967) (VARV)).